Consider the following 465-residue polypeptide: Sushi repeat-containing protein SRPX2 (465 aa).

The N-terminal stretch at 1–23 (MASQLTQRGALFLLFFLTPAVTP) is a signal peptide. Sushi domains are found at residues 69–119 (ATCY…YCRQ), 120–178 (MRCH…VCVD), and 262–321 (RRCP…ICAP). Cystine bridges form between cysteine 71-cysteine 105, cysteine 91-cysteine 117, cysteine 122-cysteine 163, and cysteine 149-cysteine 176. Residues 177-261 (VDIDPPKIRC…SCKFIVKVQV (85 aa)) form the HYR domain. 2 disulfide bridges follow: cysteine 264-cysteine 306 and cysteine 292-cysteine 319.

As to quaternary structure, forms homooligomers. Interacts with PLAUR (via the UPAR/Ly6 domains), ADAMTS4 and CTSB. Interacts with HGF; the interaction increases the mitogenic activity of HGF. Post-translationally, contains chondroitin sulfate chains. In terms of tissue distribution, expressed in neurons of the rolandic area of the brain (at protein level). Highly expressed in the brain, placenta, lung, trachea, uterus, adrenal gland, heart, ovary and placenta. Weakly expressed in the peripheral blood, brain and bone marrow. Expressed in numerous cancer cell lines and in gastrointestinal cancer cells. Higher levels found in colorectal cancers than in normal colonic mucosa.

The protein localises to the secreted. The protein resides in the cytoplasm. It is found in the cell surface. Its subcellular location is the synapse. Acts as a ligand for the urokinase plasminogen activator surface receptor. Plays a role in angiogenesis by inducing endothelial cell migration and the formation of vascular network (cords). Involved in cellular migration and adhesion. Increases the phosphorylation levels of FAK. Interacts with and increases the mitogenic activity of HGF. Promotes synapse formation. May have a role in the perisylvian region, critical for language and cognitive development. This is Sushi repeat-containing protein SRPX2 (SRPX2) from Homo sapiens (Human).